The primary structure comprises 476 residues: MSLMIRSSYVSHITLFQPRNSKPSSFTNQISFLSSSNNNPFLNLVYKRNLTMQSVSKMTVKSSLIDPDGGELVELIVPETEIGVKKAESETMPKVKLNQIDLEWVHVISEGWASPLKGFMREDEYLQSLHFNSLRLKNGTFVNMSLPIVLAIDDDTKEQIGSSENVALVCPQGDIIGSLRSVEIYKHNKEERIARTWGTTSPGLPYVEEYITPSGNWLIGGDLEVFEPIKYNDGLDHYRLSPKQLREEFDNRQADAVFAFQLRNPVHNGHALLMNDTRKRLLEMGYKNPVLLLHPLGGFTKADDVPLDVRMEQHSKVLEDGVLDPKTTIVSIFPSPMHYAGPTEVQWHAKARINAGANFYIVGRDPAGMGHPTEKRDLYDPDHGKRVLSMAPGLEKLNILPFRVAAYDTIEKKMAFFDPSRAKEFLFISGTKMRTYARTGENPPDGFMCPSGWNVLVKYYESLQESEAKQQAVVSA.

A chloroplast-targeting transit peptide spans 1–56 (MSLMIRSSYVSHITLFQPRNSKPSSFTNQISFLSSSNNNPFLNLVYKRNLTMQSVS).

The protein belongs to the sulfate adenylyltransferase family. Homotetramer. Mostly expressed in leaves or cotyledons.

The protein resides in the plastid. Its subcellular location is the chloroplast. It is found in the cytoplasm. The catalysed reaction is sulfate + ATP + H(+) = adenosine 5'-phosphosulfate + diphosphate. The protein operates within sulfur metabolism; hydrogen sulfide biosynthesis; sulfite from sulfate: step 1/3. This is ATP sulfurylase 2 (APS2) from Arabidopsis thaliana (Mouse-ear cress).